The following is a 140-amino-acid chain: 3-hydroxyacyl-[acyl-carrier-protein] dehydratase FabZ (140 aa).

Residue His-47 is part of the active site.

Belongs to the thioester dehydratase family. FabZ subfamily.

Its subcellular location is the cytoplasm. The enzyme catalyses a (3R)-hydroxyacyl-[ACP] = a (2E)-enoyl-[ACP] + H2O. Involved in unsaturated fatty acids biosynthesis. Catalyzes the dehydration of short chain beta-hydroxyacyl-ACPs and long chain saturated and unsaturated beta-hydroxyacyl-ACPs. This Streptococcus pneumoniae (strain 70585) protein is 3-hydroxyacyl-[acyl-carrier-protein] dehydratase FabZ.